Here is a 166-residue protein sequence, read N- to C-terminus: Endoribonuclease YbeY (166 aa).

Zn(2+) contacts are provided by His-132, His-136, and His-142.

This sequence belongs to the endoribonuclease YbeY family. It depends on Zn(2+) as a cofactor.

The protein localises to the cytoplasm. In terms of biological role, single strand-specific metallo-endoribonuclease involved in late-stage 70S ribosome quality control and in maturation of the 3' terminus of the 16S rRNA. The chain is Endoribonuclease YbeY from Clostridium botulinum (strain Alaska E43 / Type E3).